A 97-amino-acid polypeptide reads, in one-letter code: Type VII secretion system extracellular protein A (97 aa).

The stretch at 61 to 93 (KVEKFAQLLEEIKQQLNSTADAVQEQDQQLSNN) forms a coiled coil.

Belongs to the WXG100 family. sagEsxA-like subfamily. As to quaternary structure, forms both homodimers and heterodimers with EsxC.

It localises to the secreted. In terms of biological role, virulence factor that is important for the establishment of infection in the host. EsxA is required for EsxB synthesis as well as secretion. Modulates host cell apoptotic pathways and mediates together with EsxB the release of S.aureus from the host cell. By acting on apoptosis, plays a role in the modulation of dendritic cell-mediated immunity. This is Type VII secretion system extracellular protein A from Staphylococcus aureus (strain USA300).